Here is a 607-residue protein sequence, read N- to C-terminus: UvrABC system protein C (607 aa).

One can recognise a GIY-YIG domain in the interval 16-94 (GRPGVYRMFD…IKEWRPPYNI (79 aa)). One can recognise a UVR domain in the interval 203–238 (NALSDELNASMEKAAMALDFERAAELRDQVALLRRV).

It belongs to the UvrC family. Interacts with UvrB in an incision complex.

It localises to the cytoplasm. The UvrABC repair system catalyzes the recognition and processing of DNA lesions. UvrC both incises the 5' and 3' sides of the lesion. The N-terminal half is responsible for the 3' incision and the C-terminal half is responsible for the 5' incision. The sequence is that of UvrABC system protein C from Pseudomonas syringae pv. syringae (strain B728a).